A 135-amino-acid polypeptide reads, in one-letter code: NADH-quinone oxidoreductase subunit K (135 aa).

3 helical membrane-spanning segments follow: residues 33-53, 63-83, and 95-115; these read VLGLIPMSHGLILAGILFAIG, FLFMLMSLEIMMNAAALAFVV, and IMFIFILTLAAAEAAIGLAIL.

The protein belongs to the complex I subunit 4L family. As to quaternary structure, NDH-1 is composed of 14 different subunits. Subunits NuoA, H, J, K, L, M, N constitute the membrane sector of the complex.

The protein localises to the cell inner membrane. It carries out the reaction a quinone + NADH + 5 H(+)(in) = a quinol + NAD(+) + 4 H(+)(out). NDH-1 shuttles electrons from NADH, via FMN and iron-sulfur (Fe-S) centers, to quinones in the respiratory chain. The immediate electron acceptor for the enzyme in this species is believed to be ubiquinone. Couples the redox reaction to proton translocation (for every two electrons transferred, four hydrogen ions are translocated across the cytoplasmic membrane), and thus conserves the redox energy in a proton gradient. The polypeptide is NADH-quinone oxidoreductase subunit K (Psychrobacter arcticus (strain DSM 17307 / VKM B-2377 / 273-4)).